The chain runs to 254 residues: MKACSILFTTLITLAAAQKDSGSLDGQNSEDSSQKESSNSQEITPTTTKEAQESASTVVSTGKSLVQTSNVVSNTYAVAPSTTVVTTDAQGKTTTQYLWWVAESNSAVSTTSTASVQPTGETSSGITNSASSSTTSTSTDGPVTIVTTTNSLGETYTSTVWWLPSSATTDNTASSSKSSSGSSSKPESSTKVVSTIKSTYTTTSGSTVETLTTTYKSTVNGKVASVMSNSTNGAFAGTHIAYGAGAFAVGALLL.

Positions 1–17 are cleaved as a signal peptide; it reads MKACSILFTTLITLAAA. 3 disordered regions span residues 19–57, 111–143, and 167–191; these read KDSG…SAST, TSTA…DGPV, and ATTD…SSTK. Residues 27–42 show a composition bias toward low complexity; sequence QNSEDSSQKESSNSQE. Positions 43 to 57 are enriched in polar residues; it reads ITPTTTKEAQESAST. Residues 111-139 show a composition bias toward low complexity; the sequence is TSTASVQPTGETSSGITNSASSSTTSTST. Asparagine 229 carries N-linked (GlcNAc...) asparagine glycosylation. Asparagine 232 carries the GPI-anchor amidated asparagine lipid modification. Positions 233-254 are cleaved as a propeptide — removed in mature form; the sequence is GAFAGTHIAYGAGAFAVGALLL.

Its subcellular location is the cell membrane. Functionally, cell wall biogenesis protein that participates in the organization of the beta-glucan assembly. Involved in the mechanism responsible for cell tolerance to polyhexamethylene biguanide (PHMB), an antifungal agent. The polypeptide is Cell wall biogenesis protein NCW2 (Saccharomyces cerevisiae (strain ATCC 204508 / S288c) (Baker's yeast)).